A 118-amino-acid polypeptide reads, in one-letter code: UPF0342 protein BC_0880 (118 aa).

Belongs to the UPF0342 family.

The polypeptide is UPF0342 protein BC_0880 (Bacillus cereus (strain ATCC 14579 / DSM 31 / CCUG 7414 / JCM 2152 / NBRC 15305 / NCIMB 9373 / NCTC 2599 / NRRL B-3711)).